Here is a 76-residue protein sequence, read N- to C-terminus: MAKIFRITGIMSKKGKDPLYFRKEYKALKPEDALEILYSEFGGRYKVKRSRIKILNIEEIKPEDVTDPVLKKLVTA.

This sequence belongs to the eukaryotic ribosomal protein eL20 family. In terms of assembly, part of the 50S ribosomal subunit. Binds 23S rRNA.

The sequence is that of Large ribosomal subunit protein eL20 from Methanocaldococcus jannaschii (strain ATCC 43067 / DSM 2661 / JAL-1 / JCM 10045 / NBRC 100440) (Methanococcus jannaschii).